Reading from the N-terminus, the 304-residue chain is Serine/threonine-protein phosphatase PP1 isozyme 3 (304 aa).

Mn(2+)-binding residues include aspartate 61, histidine 63, aspartate 89, and asparagine 121. Residue histidine 122 is the Proton donor of the active site. Histidine 170 and histidine 245 together coordinate Mn(2+).

This sequence belongs to the PPP phosphatase family. PP-1 subfamily. Requires Mn(2+) as cofactor.

The enzyme catalyses O-phospho-L-seryl-[protein] + H2O = L-seryl-[protein] + phosphate. The catalysed reaction is O-phospho-L-threonyl-[protein] + H2O = L-threonyl-[protein] + phosphate. The polypeptide is Serine/threonine-protein phosphatase PP1 isozyme 3 (NPP3) (Nicotiana tabacum (Common tobacco)).